We begin with the raw amino-acid sequence, 152 residues long: Nucleoside diphosphate kinase A (152 aa).

ATP-binding residues include lysine 12, phenylalanine 60, arginine 88, and threonine 94. Lysine 100 is covalently cross-linked (Glycyl lysine isopeptide (Lys-Gly) (interchain with G-Cter in ubiquitin)). Positions 105 and 115 each coordinate ATP. The Pros-phosphohistidine intermediate role is filled by histidine 118. 3 positions are modified to phosphoserine: serine 120, serine 122, and serine 125.

The protein belongs to the NDK family. As to quaternary structure, hexamer of two different chains: An and B (A6, A5B, A4B2, A3B3, A2B4, AB5, B6). Interacts with PRUNE1. Component of the SET complex, composed of at least ANP32A, APEX1, HMGB2, NME1, SET and TREX1. Within this complex, interacts directly with SET. Also interacts with TREX1, but only following translocation to the nucleus. The cofactor is Mg(2+).

The protein localises to the cytoplasm. It is found in the nucleus. It catalyses the reaction a 2'-deoxyribonucleoside 5'-diphosphate + ATP = a 2'-deoxyribonucleoside 5'-triphosphate + ADP. It carries out the reaction a ribonucleoside 5'-diphosphate + ATP = a ribonucleoside 5'-triphosphate + ADP. Its activity is regulated as follows. Autophosphorylation at His-118 increases serine/threonine protein kinase activity of the enzyme. Interaction with the SET complex inhibits exonuclease activity. In terms of biological role, major role in the synthesis of nucleoside triphosphates other than ATP. The ATP gamma phosphate is transferred to the NDP beta phosphate via a ping-pong mechanism, using a phosphorylated active-site intermediate. Possesses nucleoside-diphosphate kinase, serine/threonine-specific protein kinase, geranyl and farnesyl pyrophosphate kinase, histidine protein kinase and 3'-5' exonuclease activities. Involved in cell proliferation, differentiation and development, signal transduction, G protein-coupled receptor endocytosis, and gene expression. Required for neural development including neural patterning and cell fate determination. During GZMA-mediated cell death, works in concert with TREX1. NME1 nicks one strand of DNA and TREX1 removes bases from the free 3' end to enhance DNA damage and prevent DNA end reannealing and rapid repair. In Canis lupus familiaris (Dog), this protein is Nucleoside diphosphate kinase A (NME1).